We begin with the raw amino-acid sequence, 374 residues long: DNA replication and repair protein RecF (374 aa).

Residue 30 to 37 (GPNAQGKT) coordinates ATP.

This sequence belongs to the RecF family.

Its subcellular location is the cytoplasm. Functionally, the RecF protein is involved in DNA metabolism; it is required for DNA replication and normal SOS inducibility. RecF binds preferentially to single-stranded, linear DNA. It also seems to bind ATP. The chain is DNA replication and repair protein RecF from Lactobacillus johnsonii (strain CNCM I-12250 / La1 / NCC 533).